The following is a 708-amino-acid chain: MGMSKSYGCFGYPLSIFFIVVNEFCERFSYYGMRALLILYFRRFIGWDDNLSTAIYHTFVALCYLTPILGALIADSWLGKFKTIVSLSIVYTIGQAVTAVSSINDLTDYNKDGTPDNLSVHVALSMIGLALIALGTGGIKPCVSAFGGDQFEEGQEKQRNRFFSIFYLAINAGSLISTIVTPMLRVHECGIYSQKACYPLAFGVPAALMAVSLIVFVIGSGMYKKFQPQGNVMGKVVKCIGFALKNRFRHRSKQFPKREHWLDWAKEKYDERLISQIKMVTKVMFLYIPLPMFWALFDQQGSRWTLQATAMSGKIGLLEVQPDQMQTVNAILIVVMVPIMDAVVYPLIAKCGFNFTSLKRMTVGMFLASMAFVMAAIVQLEIDKTLPVFPKQNEVQIKVLNIGNGAMNVSFPGAVVTVSQMSQSDGFMTFDVDKLTSINISSTGSPVIPVTYNFEQGHRHTLLVWAPNNYRVVKDGLNQKPEKGENGIRFINSLNESLNITMGDKVYVNVTSHNASEYQFFSLGTKNITISSTQQISQNCTKVLQSSNLEFGSAYTYVIGTQSTGCPELHMFEDISPNTVNMALQIPQYFLITCGEVVFSVTGLEFSYSQAPSNMKSVLQAGWLLTVAVGNIIVLIVAGAGQFSEQWAEYILFAALLLVVCVIFAIMARFYTYVNPAEIEAQFDDDEKKNLEKMNVYSTVTPVSQTQM.

A helical membrane pass occupies residues 1–21; sequence MGMSKSYGCFGYPLSIFFIVV. The Extracellular segment spans residues 22 to 53; it reads NEFCERFSYYGMRALLILYFRRFIGWDDNLST. N-linked (GlcNAc...) asparagine glycosylation is present at Asn-50. A helical transmembrane segment spans residues 54-74; the sequence is AIYHTFVALCYLTPILGALIA. Over 75–82 the chain is Cytoplasmic; that stretch reads DSWLGKFK. The chain crosses the membrane as a helical span at residues 83-103; the sequence is TIVSLSIVYTIGQAVTAVSSI. The Extracellular segment spans residues 104–118; that stretch reads NDLTDYNKDGTPDNL. Asn-117 carries an N-linked (GlcNAc...) asparagine glycan. A helical membrane pass occupies residues 119 to 139; the sequence is SVHVALSMIGLALIALGTGGI. The Cytoplasmic portion of the chain corresponds to 140 to 161; the sequence is KPCVSAFGGDQFEEGQEKQRNR. Residues 162-182 traverse the membrane as a helical segment; the sequence is FFSIFYLAINAGSLISTIVTP. Residues 183–198 lie on the Extracellular side of the membrane; it reads MLRVHECGIYSQKACY. A helical membrane pass occupies residues 199 to 219; the sequence is PLAFGVPAALMAVSLIVFVIG. Topologically, residues 220-276 are cytoplasmic; the sequence is SGMYKKFQPQGNVMGKVVKCIGFALKNRFRHRSKQFPKREHWLDWAKEKYDERLISQ. The chain crosses the membrane as a helical span at residues 277-297; that stretch reads IKMVTKVMFLYIPLPMFWALF. Over 298–327 the chain is Extracellular; sequence DQQGSRWTLQATAMSGKIGLLEVQPDQMQT. A helical membrane pass occupies residues 328 to 348; sequence VNAILIVVMVPIMDAVVYPLI. Topologically, residues 349-361 are cytoplasmic; that stretch reads AKCGFNFTSLKRM. Residues 362–382 form a helical membrane-spanning segment; it reads TVGMFLASMAFVMAAIVQLEI. At 383–584 the chain is on the extracellular side; it reads DKTLPVFPKQ…ISPNTVNMAL (202 aa). The extracellular domain (ECD) stretch occupies residues 383–585; sequence DKTLPVFPKQ…SPNTVNMALQ (203 aa). N-linked (GlcNAc...) asparagine glycans are attached at residues Asn-408, Asn-439, Asn-495, Asn-499, Asn-509, Asn-514, Asn-527, and Asn-539. The helical transmembrane segment at 585 to 605 threads the bilayer; that stretch reads QIPQYFLITCGEVVFSVTGLE. Residues 606-619 are Cytoplasmic-facing; it reads FSYSQAPSNMKSVL. The chain crosses the membrane as a helical span at residues 620–640; sequence QAGWLLTVAVGNIIVLIVAGA. Topologically, residues 641–645 are extracellular; the sequence is GQFSE. The chain crosses the membrane as a helical span at residues 646–666; that stretch reads QWAEYILFAALLLVVCVIFAI. At 667–708 the chain is on the cytoplasmic side; that stretch reads MARFYTYVNPAEIEAQFDDDEKKNLEKMNVYSTVTPVSQTQM.

The protein belongs to the major facilitator superfamily. Proton-dependent oligopeptide transporter (POT/PTR) (TC 2.A.17) family. As to quaternary structure, interacts (via extracellular domain region) with trypsin.

Its subcellular location is the apical cell membrane. The catalysed reaction is a dipeptide(out) + H(+)(out) = a dipeptide(in) + H(+)(in). It carries out the reaction an L-amino acid tripeptide(out) + H(+)(out) = an L-amino acid tripeptide(in) + H(+)(in). The enzyme catalyses L-alanyl-L-lysine(out) + H(+)(out) = L-alanyl-L-lysine(in) + H(+)(in). It catalyses the reaction L-alanyl-L-proline(out) + H(+)(out) = L-alanyl-L-proline(in) + H(+)(in). The catalysed reaction is L-alanyl-L-valine(out) + H(+)(out) = L-alanyl-L-valine(in) + H(+)(in). It carries out the reaction carnosine(out) + H(+)(out) = carnosine(in) + H(+)(in). The enzyme catalyses glycyl-L-glutamine(out) + H(+)(out) = glycyl-L-glutamine(in) + H(+)(in). It catalyses the reaction glycyl-L-leucine(out) + H(+)(out) = glycyl-L-leucine(in) + H(+)(in). The catalysed reaction is glycyl-L-proline(out) + H(+)(out) = glycyl-L-proline(in) + H(+)(in). It carries out the reaction glycyl-sarcosine(out) + H(+)(out) = glycyl-sarcosine(in) + H(+)(in). The enzyme catalyses L-leucyl-L-leucine(out) + H(+)(out) = L-leucyl-L-leucine(in) + H(+)(in). It catalyses the reaction L-leucyl-L-proline(out) + H(+)(out) = L-leucyl-L-proline(in) + H(+)(in). The catalysed reaction is L-phenylalanyl-L-leucine(out) + H(+)(out) = L-phenylalanyl-L-leucine(in) + H(+)(in). It carries out the reaction L-phenylalanyl-L-phenylalanine(out) + H(+)(out) = L-phenylalanyl-L-phenylalanine(in) + H(+)(in). The enzyme catalyses L-lysyl-glycine(out) + H(+)(out) = L-lysyl-glycine(in) + H(+)(in). It catalyses the reaction L-tyrosylglycine(out) + H(+)(out) = L-tyrosylglycine(in) + H(+)(in). The catalysed reaction is L-alanyl-L-aspartate(out) + 2 H(+)(out) = L-alanyl-L-aspartate(in) + 2 H(+)(in). It carries out the reaction L-aspartyl-glycine(out) + 2 H(+)(out) = L-aspartyl-glycine(in) + 2 H(+)(in). The enzyme catalyses glycyl-L-aspartate(out) + 2 H(+)(out) = glycyl-L-aspartate(in) + 2 H(+)(in). It catalyses the reaction glycyl-L-glutamate(out) + 2 H(+)(out) = glycyl-L-glutamate(in) + 2 H(+)(in). The catalysed reaction is L-alanyl-L-leucyl-L-alanine(out) + H(+)(out) = L-alanyl-L-leucyl-L-alanine(in) + H(+)(in). It carries out the reaction L-alanyl-L-prolylglycine(out) + H(+)(out) = L-alanyl-L-prolylglycine(in) + H(+)(in). The enzyme catalyses glycylglycyl-L-isoleucine(out) + H(+)(out) = glycylglycyl-L-isoleucine(in) + H(+)(in). It catalyses the reaction glycylglycyl-L-proline(out) + H(+)(out) = glycylglycyl-L-proline(in) + H(+)(in). The catalysed reaction is L-methionyl-L-phenylalanyl-L-methionine(out) + H(+)(out) = L-methionyl-L-phenylalanyl-L-methionine(in) + H(+)(in). It carries out the reaction N-acetyl-D-muramoyl-L-alanyl-D-isoglutamine(out) + 2 H(+)(out) = N-acetyl-D-muramoyl-L-alanyl-D-isoglutamine(in) + 2 H(+)(in). The enzyme catalyses N(alpha)-formyl-L-methionyl-L-leucyl-L-phenylalanine(out) + 2 H(+)(out) = N(alpha)-formyl-L-methionyl-L-leucyl-L-phenylalanine(in) + 2 H(+)(in). In terms of biological role, electrogenic proton-coupled amino-acid transporter that transports oligopeptides of 2 to 4 amino acids with a preference for dipeptides. Transports neutral and monovalently charged peptides with a proton to peptide stoichiometry of 1:1 or 2:1. Primarily responsible for the absorption of dietary di- and tripeptides from the small intestinal lumen. Mediates transepithelial transport of muramyl and N-formylated bacterial dipeptides contributing to recognition of pathogenic bacteria by the mucosal immune system. This Canis lupus familiaris (Dog) protein is Solute carrier family 15 member 1 (SLC15A1).